The following is a 469-amino-acid chain: Adenosylhomocysteinase (469 aa).

The substrate site is built by Thr-63, Asp-139, and Glu-164. An NAD(+)-binding site is contributed by 165–167; the sequence is TTT. The substrate site is built by Lys-194 and Asp-198. NAD(+) is bound by residues Asn-199, 228 to 233, Glu-251, Asn-300, 321 to 323, and Asn-375; these read GYGDVG and IGH.

The protein belongs to the adenosylhomocysteinase family. Requires NAD(+) as cofactor.

It is found in the cytoplasm. It catalyses the reaction S-adenosyl-L-homocysteine + H2O = L-homocysteine + adenosine. Its pathway is amino-acid biosynthesis; L-homocysteine biosynthesis; L-homocysteine from S-adenosyl-L-homocysteine: step 1/1. May play a key role in the regulation of the intracellular concentration of adenosylhomocysteine. This Pseudomonas putida (strain GB-1) protein is Adenosylhomocysteinase.